The primary structure comprises 259 residues: Global transcriptional regulator CodY (259 aa).

Positions Met-1 to Leu-155 are GAF domain. The segment at residues Ala-203–Arg-222 is a DNA-binding region (H-T-H motif). Residue Ser-215 is modified to Phosphoserine.

The protein belongs to the CodY family.

It localises to the cytoplasm. Its function is as follows. DNA-binding global transcriptional regulator which is involved in the adaptive response to starvation and acts by directly or indirectly controlling the expression of numerous genes in response to nutrient availability. During rapid exponential growth, CodY is highly active and represses genes whose products allow adaptation to nutrient depletion. The sequence is that of Global transcriptional regulator CodY from Oceanobacillus iheyensis (strain DSM 14371 / CIP 107618 / JCM 11309 / KCTC 3954 / HTE831).